Consider the following 263-residue polypeptide: MGLMNAFDSQTEDSSPAIGRNLRSRPLARKKLSEMVEEELEQMIRRREFGEGEQLPSERELMAFFNVGRPSVREALAALKRKGLVQINNGERARVSRPSADTIIGELSGMAKDFLSHPGGIAHFEQLRLFFESSLVRYAAEHATDEQIDLLAKALEINSQSLDNNAAFIRSDVDFHRVLAEIPGNPIFMAIHVALLDWLIAARPTVADQALHEHNNVSYQQHIAIVDAIRRHDPDEADRALQSHLNSVSATWHAFGQTTNKKK.

Residues 1–22 (MGLMNAFDSQTEDSSPAIGRNL) are disordered. Residues 30 to 98 (KKLSEMVEEE…NGERARVSRP (69 aa)) form the HTH gntR-type domain. Positions 58 to 77 (ERELMAFFNVGRPSVREALA) form a DNA-binding region, H-T-H motif.

Belongs to the NanR family.

Transcriptional repressor that controls expression of the genes required for the catabolism of sialic acids. The protein is HTH-type transcriptional repressor NanR of Escherichia coli (strain 55989 / EAEC).